The following is a 213-amino-acid chain: Small ribosomal subunit protein uS5 (213 aa).

The disordered stretch occupies residues 1–41 (MSGRERNGGRSAENNDKKERNERNGRNDRGGRNDRRNQQDE). The region spanning 45–108 (FIERVVTINR…EEARKNFFRV (64 aa)) is the S5 DRBM domain.

This sequence belongs to the universal ribosomal protein uS5 family. Part of the 30S ribosomal subunit. Contacts proteins S4 and S8.

In terms of biological role, with S4 and S12 plays an important role in translational accuracy. Its function is as follows. Located at the back of the 30S subunit body where it stabilizes the conformation of the head with respect to the body. The polypeptide is Small ribosomal subunit protein uS5 (Corynebacterium jeikeium (strain K411)).